The primary structure comprises 466 residues: Asparagine--tRNA ligase (466 aa).

Belongs to the class-II aminoacyl-tRNA synthetase family. In terms of assembly, homodimer.

It localises to the cytoplasm. The enzyme catalyses tRNA(Asn) + L-asparagine + ATP = L-asparaginyl-tRNA(Asn) + AMP + diphosphate + H(+). The sequence is that of Asparagine--tRNA ligase from Buchnera aphidicola subsp. Baizongia pistaciae (strain Bp).